Consider the following 1373-residue polypeptide: DNA-directed RNA polymerase subunit beta (1373 aa).

This sequence belongs to the RNA polymerase beta chain family. In terms of assembly, the RNAP catalytic core consists of 2 alpha, 1 beta, 1 beta' and 1 omega subunit. When a sigma factor is associated with the core the holoenzyme is formed, which can initiate transcription.

It catalyses the reaction RNA(n) + a ribonucleoside 5'-triphosphate = RNA(n+1) + diphosphate. DNA-dependent RNA polymerase catalyzes the transcription of DNA into RNA using the four ribonucleoside triphosphates as substrates. This Rhodopseudomonas palustris (strain BisB18) protein is DNA-directed RNA polymerase subunit beta.